Here is a 131-residue protein sequence, read N- to C-terminus: Small ribosomal subunit protein uS8 (131 aa).

Belongs to the universal ribosomal protein uS8 family. Part of the 30S ribosomal subunit. Contacts proteins S5 and S12.

Its function is as follows. One of the primary rRNA binding proteins, it binds directly to 16S rRNA central domain where it helps coordinate assembly of the platform of the 30S subunit. The protein is Small ribosomal subunit protein uS8 of Campylobacter hominis (strain ATCC BAA-381 / DSM 21671 / CCUG 45161 / LMG 19568 / NCTC 13146 / CH001A).